Reading from the N-terminus, the 447-residue chain is Glutamate--tRNA ligase 2 (447 aa).

Positions 8–18 (PSPTGYLHVGN) match the 'HIGH' region motif. Residues 239–243 (KLSKR) carry the 'KMSKS' region motif. An ATP-binding site is contributed by K242.

Belongs to the class-I aminoacyl-tRNA synthetase family. Glutamate--tRNA ligase type 1 subfamily. As to quaternary structure, monomer.

The protein resides in the cytoplasm. It catalyses the reaction tRNA(Glu) + L-glutamate + ATP = L-glutamyl-tRNA(Glu) + AMP + diphosphate. Its function is as follows. Catalyzes the attachment of glutamate to tRNA(Glu) in a two-step reaction: glutamate is first activated by ATP to form Glu-AMP and then transferred to the acceptor end of tRNA(Glu). The chain is Glutamate--tRNA ligase 2 from Granulibacter bethesdensis (strain ATCC BAA-1260 / CGDNIH1).